We begin with the raw amino-acid sequence, 390 residues long: uncharacterized protein (390 aa).

11 helical membrane-spanning segments follow: residues 10-30 (LSFCVIFLLRMLGMFMILPIL), 43-63 (FLIGLSMGIYGISQVIFQIPF), 81-101 (FMFFIGNIISASIHSIWGLII), 134-154 (AIGVSFAISFLIAVVSGPIIV), 162-182 (IFWISAFLSIVCMIIVCFFVP), 213-233 (FYLGVFFLHFLLMIKFTMIPN), 246-266 (WKVYLGTILISFFVLFLFIFY), 272-292 (ILENIIEICILFILFSEIIFL), 298-318 (LLFLIISLQIFFISFNFLEVF), 341-361 (TSQFLGIFFGGVFSGWLYSFL), and 363-383 (FSQIFYFELFIILLWLIFSFF).

This sequence belongs to the major facilitator superfamily.

The protein localises to the cell membrane. This is an uncharacterized protein from Buchnera aphidicola subsp. Acyrthosiphon pisum (strain APS) (Acyrthosiphon pisum symbiotic bacterium).